Here is a 134-residue protein sequence, read N- to C-terminus: Holo-[acyl-carrier-protein] synthase (134 aa).

Residues Asp8 and Glu57 each coordinate Mg(2+).

Belongs to the P-Pant transferase superfamily. AcpS family. Mg(2+) is required as a cofactor.

The protein localises to the cytoplasm. It carries out the reaction apo-[ACP] + CoA = holo-[ACP] + adenosine 3',5'-bisphosphate + H(+). In terms of biological role, transfers the 4'-phosphopantetheine moiety from coenzyme A to a Ser of acyl-carrier-protein. The polypeptide is Holo-[acyl-carrier-protein] synthase (Rhizobium johnstonii (strain DSM 114642 / LMG 32736 / 3841) (Rhizobium leguminosarum bv. viciae)).